Reading from the N-terminus, the 96-residue chain is Small ribosomal subunit protein bS6 (96 aa).

The protein belongs to the bacterial ribosomal protein bS6 family.

Binds together with bS18 to 16S ribosomal RNA. This is Small ribosomal subunit protein bS6 from Mycolicibacterium paratuberculosis (strain ATCC BAA-968 / K-10) (Mycobacterium paratuberculosis).